A 281-amino-acid chain; its full sequence is 4-hydroxy-3-methylbut-2-enyl diphosphate reductase (281 aa).

Residue Cys12 participates in [4Fe-4S] cluster binding. (2E)-4-hydroxy-3-methylbut-2-enyl diphosphate-binding residues include His41 and His74. His41 and His74 together coordinate dimethylallyl diphosphate. Residues His41 and His74 each coordinate isopentenyl diphosphate. Position 96 (Cys96) interacts with [4Fe-4S] cluster. His124 contributes to the (2E)-4-hydroxy-3-methylbut-2-enyl diphosphate binding site. His124 serves as a coordination point for dimethylallyl diphosphate. His124 contacts isopentenyl diphosphate. The active-site Proton donor is Glu126. Thr164 is a binding site for (2E)-4-hydroxy-3-methylbut-2-enyl diphosphate. [4Fe-4S] cluster is bound at residue Cys193. Residues Ser221, Asn223, and Ser265 each contribute to the (2E)-4-hydroxy-3-methylbut-2-enyl diphosphate site. Dimethylallyl diphosphate contacts are provided by Ser221, Asn223, and Ser265. Ser221, Asn223, and Ser265 together coordinate isopentenyl diphosphate.

The protein belongs to the IspH family. [4Fe-4S] cluster is required as a cofactor.

It carries out the reaction isopentenyl diphosphate + 2 oxidized [2Fe-2S]-[ferredoxin] + H2O = (2E)-4-hydroxy-3-methylbut-2-enyl diphosphate + 2 reduced [2Fe-2S]-[ferredoxin] + 2 H(+). The enzyme catalyses dimethylallyl diphosphate + 2 oxidized [2Fe-2S]-[ferredoxin] + H2O = (2E)-4-hydroxy-3-methylbut-2-enyl diphosphate + 2 reduced [2Fe-2S]-[ferredoxin] + 2 H(+). It participates in isoprenoid biosynthesis; dimethylallyl diphosphate biosynthesis; dimethylallyl diphosphate from (2E)-4-hydroxy-3-methylbutenyl diphosphate: step 1/1. It functions in the pathway isoprenoid biosynthesis; isopentenyl diphosphate biosynthesis via DXP pathway; isopentenyl diphosphate from 1-deoxy-D-xylulose 5-phosphate: step 6/6. In terms of biological role, catalyzes the conversion of 1-hydroxy-2-methyl-2-(E)-butenyl 4-diphosphate (HMBPP) into a mixture of isopentenyl diphosphate (IPP) and dimethylallyl diphosphate (DMAPP). Acts in the terminal step of the DOXP/MEP pathway for isoprenoid precursor biosynthesis. The protein is 4-hydroxy-3-methylbut-2-enyl diphosphate reductase of Oleidesulfovibrio alaskensis (strain ATCC BAA-1058 / DSM 17464 / G20) (Desulfovibrio alaskensis).